The sequence spans 307 residues: Myeloid-associated differentiation marker-like protein 2 (307 aa).

2 consecutive MARVEL domains span residues 17–154 (AVTS…ARPG) and 159–303 (YMAT…RIRF). The next 7 helical transmembrane spans lie at 53–73 (FCMAAWGFCFAFSVLVVACEF), 90–110 (AFAMLATLLCATAAVIYPLYF), 129–149 (LAASVFAGLLFLAYAAEVALT), 163–183 (VSGLLKIVQAFVACIIFGALV), 198–218 (VAVYSLCFMATVAVVVLSVMG), 232–252 (VVYTFLAVLLYLSAAVIWPVF), and 278–298 (LVVAIFTYVNLLLYIVDLAYS).

This sequence belongs to the MAL family.

Its subcellular location is the membrane. The chain is Myeloid-associated differentiation marker-like protein 2 (Myadml2) from Rattus norvegicus (Rat).